The sequence spans 271 residues: Calcium-binding protein 4 (271 aa).

Positions 1-105 are disordered; that stretch reads MATEHNVQLV…RSDPQQDAAQ (105 aa). Ser-37 carries the phosphoserine; by PKC/PRKCZ modification. The segment covering 45 to 67 has biased composition (low complexity); the sequence is GSQKASSGDQSSSQGSEASGSSK. The span at 87-96 shows a compositional bias: basic residues; that stretch reads ASHRHSHRHR. EF-hand domains follow at residues 125-160, 179-196, 202-237, and 239-271; these read EELE…LGYM, GFVD…KLRE, LGVR…LLGE, and LEGT…LSTG. Ca(2+) contacts are provided by Asp-138, Asp-140, Asp-142, Tyr-144, and Glu-149. Positions 215, 217, 219, 221, 226, 252, 254, 256, 258, and 263 each coordinate Ca(2+).

As to quaternary structure, interacts with CACNA1F and CACNA1D (via IQ domain) in a calcium independent manner. Interacts (via N-terminus) with UNC119. Post-translationally, phosphorylated. Phosphorylation levels change with the light conditions and regulate the activity, but has no effect on calcium binding. As to expression, expressed in retina and in the inner hair cells (IHC) of the cochlea.

The protein resides in the cytoplasm. It is found in the presynapse. In terms of biological role, involved in normal synaptic function through regulation of Ca(2+) influx and neurotransmitter release in photoreceptor synaptic terminals and in auditory transmission. Modulator of CACNA1D and CACNA1F, suppressing the calcium-dependent inactivation and shifting the activation range to more hyperpolarized voltages. The protein is Calcium-binding protein 4 (Cabp4) of Mus musculus (Mouse).